The chain runs to 463 residues: Hydroxyacid-oxoacid transhydrogenase, mitochondrial (463 aa).

It belongs to the iron-containing alcohol dehydrogenase family. Hydroxyacid-oxoacid transhydrogenase subfamily.

It localises to the mitochondrion. It catalyses the reaction (S)-3-hydroxybutanoate + 2-oxoglutarate = (R)-2-hydroxyglutarate + acetoacetate. The enzyme catalyses 4-hydroxybutanoate + 2-oxoglutarate = (R)-2-hydroxyglutarate + succinate semialdehyde. In terms of biological role, catalyzes the cofactor-independent reversible oxidation of gamma-hydroxybutyrate (GHB) to succinic semialdehyde (SSA) coupled to reduction of 2-ketoglutarate (2-KG) to D-2-hydroxyglutarate (D-2-HG). L-3-hydroxybutyrate (L-3-OHB) is also a substrate for HOT when using 2-KG as hydrogen acceptor, resulting in the formation of D-2-HG. This is Hydroxyacid-oxoacid transhydrogenase, mitochondrial (adhfe1) from Xenopus laevis (African clawed frog).